Consider the following 576-residue polypeptide: V-type ATP synthase alpha chain (576 aa).

An ATP-binding site is contributed by 238–245; the sequence is GPFGAGKT.

Belongs to the ATPase alpha/beta chains family.

It carries out the reaction ATP + H2O + 4 H(+)(in) = ADP + phosphate + 5 H(+)(out). Its function is as follows. Produces ATP from ADP in the presence of a proton gradient across the membrane. The V-type alpha chain is a catalytic subunit. This is V-type ATP synthase alpha chain from Borrelia duttonii (strain Ly).